The primary structure comprises 596 residues: Elongation factor 4 (596 aa).

The region spanning Lys-2–Glu-184 is the tr-type G domain. GTP-binding positions include Asp-14 to Thr-19 and Asn-131 to Asp-134.

The protein belongs to the TRAFAC class translation factor GTPase superfamily. Classic translation factor GTPase family. LepA subfamily.

It localises to the cell inner membrane. It carries out the reaction GTP + H2O = GDP + phosphate + H(+). Functionally, required for accurate and efficient protein synthesis under certain stress conditions. May act as a fidelity factor of the translation reaction, by catalyzing a one-codon backward translocation of tRNAs on improperly translocated ribosomes. Back-translocation proceeds from a post-translocation (POST) complex to a pre-translocation (PRE) complex, thus giving elongation factor G a second chance to translocate the tRNAs correctly. Binds to ribosomes in a GTP-dependent manner. In Neorickettsia sennetsu (strain ATCC VR-367 / Miyayama) (Ehrlichia sennetsu), this protein is Elongation factor 4.